The chain runs to 344 residues: Probable electron transfer flavoprotein subunit alpha, mitochondrial (344 aa).

284–312 (LYIAIGVSGAVQHLAGMKDSKVIVAINND) contributes to the FAD binding site.

It belongs to the ETF alpha-subunit/FixB family. Heterodimer of an alpha and a beta subunit. The cofactor is FAD.

The protein localises to the mitochondrion matrix. Functionally, the electron transfer flavoprotein serves as a specific electron acceptor for several dehydrogenases, including five acyl-CoA dehydrogenases, glutaryl-CoA and sarcosine dehydrogenase. It transfers the electrons to the main mitochondrial respiratory chain via ETF-ubiquinone oxidoreductase (ETF dehydrogenase). The protein is Probable electron transfer flavoprotein subunit alpha, mitochondrial (AIM45) of Saccharomyces cerevisiae (strain ATCC 204508 / S288c) (Baker's yeast).